The sequence spans 230 residues: Acyl-protein thioesterase 1 (230 aa).

Active-site charge relay system residues include Ser-119, Asp-174, and His-208. Lys-224 carries the N6-acetyllysine modification.

Belongs to the AB hydrolase superfamily. AB hydrolase 2 family. In terms of assembly, homodimer. Ubiquitous. Detected at low levels in all tissues tested.

Its subcellular location is the cytoplasm. The protein resides in the cell membrane. The protein localises to the nucleus membrane. It localises to the endoplasmic reticulum. It catalyses the reaction S-hexadecanoyl-L-cysteinyl-[protein] + H2O = L-cysteinyl-[protein] + hexadecanoate + H(+). The enzyme catalyses 1-hexadecanoyl-sn-glycero-3-phosphocholine + H2O = sn-glycerol 3-phosphocholine + hexadecanoate + H(+). It carries out the reaction a 1-(9Z-octadecenoyl)-2-acyl-sn-glycero-3-phosphocholine + H2O = a 2-acyl-sn-glycero-3-phosphocholine + (9Z)-octadecenoate + H(+). Functionally, acts as an acyl-protein thioesterase. Hydrolyzes fatty acids from S-acylated cysteine residues in proteins such as trimeric G alpha proteins or HRAS. Acts as a palmitoyl thioesterase that catalyzes depalmitoylation of proteins, such as ADRB2, KCNMA1 and SQSTM1. Acts as a negative regulator of autophagy by mediating palmitoylation of SQSTM1, decreasing affinity between SQSTM1 and ATG8 proteins and recruitment of ubiquitinated cargo proteins to autophagosomes. Acts as a lysophospholipase and hydrolyzes lysophosphatidylcholine (lyso-PC). Also hydrolyzes lysophosphatidylethanolamine (lyso-PE), lysophosphatidylinositol (lyso-PI) and lysophosphatidylserine (lyso-PS). Has much higher thioesterase activity than lysophospholipase activity. Contributes to the production of lysophosphatidic acid (LPA) during blood coagulation by recognizing and cleaving plasma phospholipids to generate lysophospholipids which in turn act as substrates for ENPP2 to produce LPA. This chain is Acyl-protein thioesterase 1 (Lypla1), found in Rattus norvegicus (Rat).